The chain runs to 347 residues: GMP reductase (347 aa).

NADP(+) is bound at residue 108 to 131 (AEFEKVKKIMALSEEFVFICIDIA). Gly181 and Gly183 together coordinate K(+). The Thioimidate intermediate role is filled by Cys186. Position 216-239 (216-239 (IIGDGGCSCAGDVSKAFGGGADFV)) interacts with NADP(+).

It belongs to the IMPDH/GMPR family. GuaC type 1 subfamily. As to quaternary structure, homotetramer.

It catalyses the reaction IMP + NH4(+) + NADP(+) = GMP + NADPH + 2 H(+). Catalyzes the irreversible NADPH-dependent deamination of GMP to IMP. It functions in the conversion of nucleobase, nucleoside and nucleotide derivatives of G to A nucleotides, and in maintaining the intracellular balance of A and G nucleotides. The polypeptide is GMP reductase (Vibrio atlanticus (strain LGP32) (Vibrio splendidus (strain Mel32))).